The chain runs to 449 residues: Dolichyl-diphosphooligosaccharide--protein glycosyltransferase 48 kDa subunit (449 aa).

The signal sequence occupies residues 1–18 (MMWKALLIAVLAIAHCQA). Over 19–412 (VLETDANTLV…ERFIPSAFPY (394 aa)) the chain is Lumenal. Residues 413–433 (YTSAFSMMIGVFVFSFVFLHF) traverse the membrane as a helical segment. Over 434–449 (KDEPVGRAAKEDKKSQ) the chain is Cytoplasmic.

Belongs to the DDOST 48 kDa subunit family. Component of the oligosaccharyltransferase (OST) complex.

The protein localises to the endoplasmic reticulum membrane. The protein operates within protein modification; protein glycosylation. Its function is as follows. Subunit of the oligosaccharyl transferase (OST) complex that catalyzes the initial transfer of a defined glycan (Glc(3)Man(9)GlcNAc(2) in eukaryotes) from the lipid carrier dolichol-pyrophosphate to an asparagine residue within an Asn-X-Ser/Thr consensus motif in nascent polypeptide chains, the first step in protein N-glycosylation. N-glycosylation occurs cotranslationally and the complex associates with the Sec61 complex at the channel-forming translocon complex that mediates protein translocation across the endoplasmic reticulum (ER). All subunits are required for a maximal enzyme activity. Required for the assembly of both SST3A- and SS3B-containing OST complexes. In Drosophila melanogaster (Fruit fly), this protein is Dolichyl-diphosphooligosaccharide--protein glycosyltransferase 48 kDa subunit (Ost48).